The following is a 189-amino-acid chain: Elongation factor P (189 aa).

The protein belongs to the elongation factor P family.

It localises to the cytoplasm. Its pathway is protein biosynthesis; polypeptide chain elongation. Involved in peptide bond synthesis. Stimulates efficient translation and peptide-bond synthesis on native or reconstituted 70S ribosomes in vitro. Probably functions indirectly by altering the affinity of the ribosome for aminoacyl-tRNA, thus increasing their reactivity as acceptors for peptidyl transferase. This Sinorhizobium fredii (strain NBRC 101917 / NGR234) protein is Elongation factor P.